The sequence spans 325 residues: Tetraacyldisaccharide 4'-kinase (325 aa).

55 to 62 (TAGGNGKT) provides a ligand contact to ATP.

Belongs to the LpxK family.

It carries out the reaction a lipid A disaccharide + ATP = a lipid IVA + ADP + H(+). Its pathway is glycolipid biosynthesis; lipid IV(A) biosynthesis; lipid IV(A) from (3R)-3-hydroxytetradecanoyl-[acyl-carrier-protein] and UDP-N-acetyl-alpha-D-glucosamine: step 6/6. Functionally, transfers the gamma-phosphate of ATP to the 4'-position of a tetraacyldisaccharide 1-phosphate intermediate (termed DS-1-P) to form tetraacyldisaccharide 1,4'-bis-phosphate (lipid IVA). This is Tetraacyldisaccharide 4'-kinase from Salmonella enteritidis PT4 (strain P125109).